Reading from the N-terminus, the 74-residue chain is Conotoxin Vi15a (74 aa).

The signal sequence occupies residues 1–19 (MMPVILLLLLSLAIRCADG). The propeptide occupies 20–43 (KAVQGDSDPSASLLTGDKNHDLPV). At W72 the chain carries Tryptophan amide.

Contains four disulfide bonds. In terms of tissue distribution, expressed by the venom duct.

It localises to the secreted. The protein is Conotoxin Vi15a of Conus virgo (Virgin cone).